The primary structure comprises 170 residues: Photosystem I assembly protein Ycf3 (170 aa).

TPR repeat units lie at residues 35 to 68, 72 to 105, and 120 to 153; these read AFTY…EIDP, SYIL…NPFL, and GEQA…TPGN.

It belongs to the Ycf3 family.

It is found in the plastid. Its subcellular location is the chloroplast thylakoid membrane. Essential for the assembly of the photosystem I (PSI) complex. May act as a chaperone-like factor to guide the assembly of the PSI subunits. In Saccharum officinarum (Sugarcane), this protein is Photosystem I assembly protein Ycf3.